Consider the following 485-residue polypeptide: Cobyric acid synthase (485 aa).

The GATase cobBQ-type domain occupies 250–448 (TQTVAVIAYP…LHGMFEDPRV (199 aa)). C334 (nucleophile) is an active-site residue. Residue H440 is part of the active site.

It belongs to the CobB/CobQ family. CobQ subfamily.

Its pathway is cofactor biosynthesis; adenosylcobalamin biosynthesis. Functionally, catalyzes amidations at positions B, D, E, and G on adenosylcobyrinic A,C-diamide. NH(2) groups are provided by glutamine, and one molecule of ATP is hydrogenolyzed for each amidation. The sequence is that of Cobyric acid synthase from Polaromonas naphthalenivorans (strain CJ2).